A 644-amino-acid chain; its full sequence is 3D-(3,5/4)-trihydroxycyclohexane-1,2-dione hydrolase 2 (644 aa).

Residue Glu-65 coordinates thiamine diphosphate. Positions 442–522 (SLPGDLQRMW…INVLLFDNSG (81 aa)) are thiamine pyrophosphate binding. Residues Asp-493 and Asn-520 each coordinate Mg(2+).

Belongs to the TPP enzyme family. The cofactor is Mg(2+). It depends on thiamine diphosphate as a cofactor.

The enzyme catalyses 3D-3,5/4-trihydroxycyclohexane-1,2-dione + H2O = 5-deoxy-D-glucuronate + H(+). The protein operates within polyol metabolism; myo-inositol degradation into acetyl-CoA; acetyl-CoA from myo-inositol: step 3/7. In terms of biological role, involved in the cleavage of the C1-C2 bond of 3D-(3,5/4)-trihydroxycyclohexane-1,2-dione (THcHDO) to yield 5-deoxy-glucuronate (5DG). The chain is 3D-(3,5/4)-trihydroxycyclohexane-1,2-dione hydrolase 2 from Bacillus cereus (strain ZK / E33L).